A 591-amino-acid chain; its full sequence is Serine/threonine-protein phosphatase PP2A 65 kDa regulatory subunit (591 aa).

Ala-2 carries the N-acetylalanine modification. HEAT repeat units lie at residues 10–48 (DSLYPIAVLIDELKNEDVQLRLNSIKKLSTIALALGEER), 49–86 (TRSELIPFLTETIYDEDEVLLALADQLGNFTSLVGGPE), 87–125 (FAMYLIPPLESLATVEETVVRDKAVESLRTVAAEHSAQD), 126–163 (LEIHVVPTLQRLVSGDWFTSRTSACGLFSVCYPRVTQP), 164–202 (VKAELRANFRKLCQDETPMVRRAAANKLGEFAKVVETEY), 203–241 (LKSDLIPNFVQLAQDDQDSVRLLAVEACVSIAQLLPQDD), 242–280 (VEHLVLPTLRQCASDSSWRVRYMVAEKFVDLQKAVGPEI), 281–323 (TRVD…QVQI), 324–362 (ILSSILPYVRDLVSDPNPHVKSALASVIMGLSPMLGAYQ), 363–401 (TVEQLLPLFLIQLKDECPEVRLNIISNLDCVNDVIGIQQ), 402–440 (LSQSLLPAIVELAEDSKWRVRLAIIEYMPALAGQLGQEF), 441–479 (FDQKLRGLCMGWLNDHVYAIREAATLNMKKLVEQFGAPW), 480–518 (AEQAIIPMILVMSRNKNYLHRMTCLFCLNVLAEVCGTDI), 519–557 (TTKLLLPTVLLLAADPVANVRFNVAKTLQKISPFLEASV), and 558–591 (IDAQVKPTLDKLNTDTDVDVKHFAAQAIAGIAAA).

The protein belongs to the phosphatase 2A regulatory subunit A family. PP2A exists in several trimeric forms, all of which consist of a core composed of a catalytic subunit associated with a 65 kDa regulatory subunit (PR65) (subunit A). The core complex associates with a third, variable subunit (subunit B), which confers distinct properties to the holoenzyme. Interacts with the inorganic phosphate transporter PXo (CG10483). Component of the Integrator-PP2A (INTAC) complex, composed of the Integrator core complex and protein phosphatase 2A subunits mts/PP2A and Pp2A-29B. Expression varies in tissues throughout development. Highly distributed expression in early embryos. In late embryonal development, found at high levels in nervous system and gonads. In third instar larvae, found in brain, imaginal disks and salivary glands.

It is found in the nucleus. Functionally, the PR65 subunit of protein phosphatase 2A serves as a scaffolding molecule to coordinate the assembly of the catalytic subunit and a variable regulatory B subunit. Key mediator of a quality checkpoint during transcription elongation as part of the Integrator-PP2A (INTAC) complex. The INTAC complex drives premature transcription termination of transcripts that are unfavorably configured for transcriptional elongation: within the INTAC complex, acts as a scaffolding subunit for mts/PP2A, which catalyzes dephosphorylation of the C-terminal domain (CTD) of Pol II subunit POLR2A/RPB1 and Spt5, thereby preventing transcriptional elongation. This Drosophila melanogaster (Fruit fly) protein is Serine/threonine-protein phosphatase PP2A 65 kDa regulatory subunit (Pp2A-29B).